The primary structure comprises 246 residues: 7-cyano-7-deazaguanine synthase (246 aa).

24 to 34 (FSGGLDSTTVL) is an ATP binding site. Zn(2+) contacts are provided by cysteine 209, cysteine 219, cysteine 222, and cysteine 225.

The protein belongs to the QueC family. Zn(2+) is required as a cofactor.

It catalyses the reaction 7-carboxy-7-deazaguanine + NH4(+) + ATP = 7-cyano-7-deazaguanine + ADP + phosphate + H2O + H(+). Its pathway is purine metabolism; 7-cyano-7-deazaguanine biosynthesis. Its function is as follows. Catalyzes the ATP-dependent conversion of 7-carboxy-7-deazaguanine (CDG) to 7-cyano-7-deazaguanine (preQ(0)). The sequence is that of 7-cyano-7-deazaguanine synthase from Polynucleobacter asymbioticus (strain DSM 18221 / CIP 109841 / QLW-P1DMWA-1) (Polynucleobacter necessarius subsp. asymbioticus).